The primary structure comprises 352 residues: Molybdenum import ATP-binding protein ModC (352 aa).

An ABC transporter domain is found at 1-229 (MLELNFSQTL…SVMNPWLPKE (229 aa)). 31–38 (GVSGAGKT) provides a ligand contact to ATP. In terms of domain architecture, Mop spans 289–352 (QTSIRNVLRA…AQIKSVSITA (64 aa)).

It belongs to the ABC transporter superfamily. Molybdate importer (TC 3.A.1.8) family. In terms of assembly, the complex is composed of two ATP-binding proteins (ModC), two transmembrane proteins (ModB) and a solute-binding protein (ModA).

It is found in the cell inner membrane. The catalysed reaction is molybdate(out) + ATP + H2O = molybdate(in) + ADP + phosphate + H(+). In terms of biological role, part of the ABC transporter complex ModABC involved in molybdenum import. Responsible for energy coupling to the transport system. The polypeptide is Molybdenum import ATP-binding protein ModC (Shigella boydii serotype 4 (strain Sb227)).